A 187-amino-acid chain; its full sequence is Peroxisome assembly protein 22 (187 aa).

A helical transmembrane segment spans residues 7-29 (NTFFGLAALGALGLGYSVYKSFI).

Belongs to the peroxin-22 family. In terms of assembly, interacts with PEX4.

It localises to the peroxisome membrane. Its function is as follows. Involved in peroxisome biogenesis. This is Peroxisome assembly protein 22 (PEX22) from Komagataella pastoris (Yeast).